The primary structure comprises 357 residues: Beta-hexosaminidase (357 aa).

Substrate is bound by residues D72, R80, R146, and 176–177 (KH). H189 serves as the catalytic Proton donor/acceptor. D260 functions as the Nucleophile in the catalytic mechanism.

The protein belongs to the glycosyl hydrolase 3 family. NagZ subfamily.

The protein localises to the cytoplasm. The catalysed reaction is Hydrolysis of terminal non-reducing N-acetyl-D-hexosamine residues in N-acetyl-beta-D-hexosaminides.. It functions in the pathway cell wall biogenesis; peptidoglycan recycling. In terms of biological role, plays a role in peptidoglycan recycling by cleaving the terminal beta-1,4-linked N-acetylglucosamine (GlcNAc) from peptide-linked peptidoglycan fragments, giving rise to free GlcNAc, anhydro-N-acetylmuramic acid and anhydro-N-acetylmuramic acid-linked peptides. This is Beta-hexosaminidase from Hydrogenovibrio crunogenus (strain DSM 25203 / XCL-2) (Thiomicrospira crunogena).